The following is a 612-amino-acid chain: Dihydroxy-acid dehydratase (612 aa).

Asp81 provides a ligand contact to Mg(2+). Residue Cys122 participates in [2Fe-2S] cluster binding. Mg(2+)-binding residues include Asp123 and Lys124. Lys124 carries the N6-carboxylysine modification. A [2Fe-2S] cluster-binding site is contributed by Cys193. Glu489 serves as a coordination point for Mg(2+). The Proton acceptor role is filled by Ser515.

This sequence belongs to the IlvD/Edd family. Homodimer. [2Fe-2S] cluster serves as cofactor. Requires Mg(2+) as cofactor.

The catalysed reaction is (2R)-2,3-dihydroxy-3-methylbutanoate = 3-methyl-2-oxobutanoate + H2O. It catalyses the reaction (2R,3R)-2,3-dihydroxy-3-methylpentanoate = (S)-3-methyl-2-oxopentanoate + H2O. It functions in the pathway amino-acid biosynthesis; L-isoleucine biosynthesis; L-isoleucine from 2-oxobutanoate: step 3/4. Its pathway is amino-acid biosynthesis; L-valine biosynthesis; L-valine from pyruvate: step 3/4. Functions in the biosynthesis of branched-chain amino acids. Catalyzes the dehydration of (2R,3R)-2,3-dihydroxy-3-methylpentanoate (2,3-dihydroxy-3-methylvalerate) into 2-oxo-3-methylpentanoate (2-oxo-3-methylvalerate) and of (2R)-2,3-dihydroxy-3-methylbutanoate (2,3-dihydroxyisovalerate) into 2-oxo-3-methylbutanoate (2-oxoisovalerate), the penultimate precursor to L-isoleucine and L-valine, respectively. The sequence is that of Dihydroxy-acid dehydratase from Xanthomonas campestris pv. campestris (strain B100).